The sequence spans 384 residues: Probable UDP-galactopyranose mutase (384 aa).

The first 19 residues, 1-19, serve as a signal peptide directing secretion; the sequence is MNNKNIMIVGAGFSGVVIA. FAD-binding positions include Ser14, 33 to 34, Asn41, and 60 to 61; these read DR and HI. Asn84, Phe151, Thr156, Trp160, and Tyr185 together coordinate UDP-alpha-D-galactose. Phe219 contributes to the FAD binding site. UDP-alpha-D-galactose-binding residues include Asn270, Arg280, and Tyr314. An FAD-binding site is contributed by Arg343. Tyr349 provides a ligand contact to UDP-alpha-D-galactose. 350 to 355 contributes to the FAD binding site; sequence LDMDVT.

It belongs to the UDP-galactopyranose/dTDP-fucopyranose mutase family. As to quaternary structure, homodimer. Requires FAD as cofactor.

The catalysed reaction is UDP-alpha-D-galactose = UDP-alpha-D-galactofuranose. It participates in bacterial outer membrane biogenesis; LPS O-antigen biosynthesis. Its function is as follows. Catalyzes the interconversion through a 2-keto intermediate of uridine diphosphogalactopyranose (UDP-GalP) into uridine diphosphogalactofuranose (UDP-GalF). The protein is Probable UDP-galactopyranose mutase (rfbD) of Klebsiella pneumoniae.